A 155-amino-acid polypeptide reads, in one-letter code: Endoribonuclease YbeY (155 aa).

Zn(2+) contacts are provided by H110, H114, and H120.

It belongs to the endoribonuclease YbeY family. Zn(2+) serves as cofactor.

Its subcellular location is the cytoplasm. Functionally, single strand-specific metallo-endoribonuclease involved in late-stage 70S ribosome quality control and in maturation of the 3' terminus of the 16S rRNA. The protein is Endoribonuclease YbeY of Deinococcus radiodurans (strain ATCC 13939 / DSM 20539 / JCM 16871 / CCUG 27074 / LMG 4051 / NBRC 15346 / NCIMB 9279 / VKM B-1422 / R1).